A 391-amino-acid chain; its full sequence is DNA polymerase IV (391 aa).

Residues 6 to 187 (IIHVDMDAFF…LPVEMLWGVG (182 aa)) form the UmuC domain. Positions 10 and 105 each coordinate Mg(2+). Glu106 is an active-site residue.

It belongs to the DNA polymerase type-Y family. Monomer. Requires Mg(2+) as cofactor.

Its subcellular location is the cytoplasm. It carries out the reaction DNA(n) + a 2'-deoxyribonucleoside 5'-triphosphate = DNA(n+1) + diphosphate. In terms of biological role, poorly processive, error-prone DNA polymerase involved in untargeted mutagenesis. Copies undamaged DNA at stalled replication forks, which arise in vivo from mismatched or misaligned primer ends. These misaligned primers can be extended by PolIV. Exhibits no 3'-5' exonuclease (proofreading) activity. May be involved in translesional synthesis, in conjunction with the beta clamp from PolIII. This Carboxydothermus hydrogenoformans (strain ATCC BAA-161 / DSM 6008 / Z-2901) protein is DNA polymerase IV.